The primary structure comprises 445 residues: Phosphoglucosamine mutase (445 aa).

The active-site Phosphoserine intermediate is the S102. Mg(2+)-binding residues include S102, D241, D243, and D245. Residue S102 is modified to Phosphoserine.

It belongs to the phosphohexose mutase family. Mg(2+) serves as cofactor. In terms of processing, activated by phosphorylation.

It carries out the reaction alpha-D-glucosamine 1-phosphate = D-glucosamine 6-phosphate. Catalyzes the conversion of glucosamine-6-phosphate to glucosamine-1-phosphate. The sequence is that of Phosphoglucosamine mutase from Escherichia coli O127:H6 (strain E2348/69 / EPEC).